The following is a 401-amino-acid chain: MEEKRENTNSIYIVPELLEDIFLRLPLKSILKFKTVSRQWRSILESKLFVERRGNLQKHHRKILAAYNCNYFMRPSIFPESRFEGDEEIVYLHCDAAQPSMTCDGLLCITEPGWFNVLNPSAGQLRRFPPGPGPVKGPQENWLLGFGRDNVTGRYKIVRMCFHDCYEFGILDIETGVWSKLRSPPHNMLPGSKSVCVNGSIYWLQISAGYIILAMDLHEESYHGVHHLPATWVTQETQLVNLEDRLAMAMTTNVGPEWILEIWSMDIEGKGWSKGYSWSKSYSISLAHGVGFSWPWQKRWFTPVWVSKQGNLLFYDNHKRLFKYYSGTDEIRCLSSNICVISSYVENLAPLPLKPSHTHHDLGNSNSKFSTSRCHLFPTRGSWISKVLFTSILFGYICLPL.

One can recognise an F-box domain in the interval 7–53; that stretch reads NTNSIYIVPELLEDIFLRLPLKSILKFKTVSRQWRSILESKLFVERR.

This chain is F-box protein At2g43440, found in Arabidopsis thaliana (Mouse-ear cress).